Reading from the N-terminus, the 354-residue chain is 3'-5' exonuclease (354 aa).

The interval Met1–Lys120 is disordered. Composition is skewed to basic and acidic residues over residues Lys13–Lys30 and Lys37–Ala50. The segment covering Thr59–Arg70 has biased composition (basic residues). Over residues Lys71 to Pro91 the composition is skewed to basic and acidic residues. Residues Ser104, Ser110, and Ser112 each carry the phosphoserine modification. In terms of domain architecture, 3'-5' exonuclease spans Trp149 to Arg314. Mg(2+) contacts are provided by Asp163, Glu165, and Asp301.

It belongs to the WRNexo family.

The protein localises to the nucleus. In terms of biological role, has exonuclease activity on both single-stranded and duplex templates bearing overhangs, but not blunt ended duplex DNA, and cleaves in a 3'-5' direction. Essential for the formation of DNA replication focal centers. Has an important role in maintaining genome stability. The sequence is that of 3'-5' exonuclease from Drosophila simulans (Fruit fly).